We begin with the raw amino-acid sequence, 126 residues long: Ribonuclease P protein component (126 aa).

It belongs to the RnpA family. Consists of a catalytic RNA component (M1 or rnpB) and a protein subunit.

It catalyses the reaction Endonucleolytic cleavage of RNA, removing 5'-extranucleotides from tRNA precursor.. Functionally, RNaseP catalyzes the removal of the 5'-leader sequence from pre-tRNA to produce the mature 5'-terminus. It can also cleave other RNA substrates such as 4.5S RNA. The protein component plays an auxiliary but essential role in vivo by binding to the 5'-leader sequence and broadening the substrate specificity of the ribozyme. The protein is Ribonuclease P protein component of Synechococcus sp. (strain JA-3-3Ab) (Cyanobacteria bacterium Yellowstone A-Prime).